We begin with the raw amino-acid sequence, 120 residues long: U13-lycotoxin-Ls1f (120 aa).

The signal sequence occupies residues 1-19 (MKILFVLISILYAVYRFSS). A propeptide spanning residues 20–54 (EEDVDSAYLANELEPVEDINSEQYAALEPKEEQER) is cleaved from the precursor. Cystine bridges form between Cys56–Cys70, Cys63–Cys76, Cys69–Cys87, and Cys78–Cys85. In terms of domain architecture, Agouti spans 56–95 (CAGMGQDCKDDCDCCLNIATCNCWFGRYFCSCTFGDYQTC).

Belongs to the neurotoxin 05 (agouti) family. In terms of processing, contains 6 disulfide bonds. Expressed by the venom gland.

It is found in the secreted. The protein is U13-lycotoxin-Ls1f of Lycosa singoriensis (Wolf spider).